The chain runs to 847 residues: Alanine--tRNA ligase (847 aa).

4 residues coordinate Zn(2+): H554, H558, C656, and H660.

It belongs to the class-II aminoacyl-tRNA synthetase family. Zn(2+) is required as a cofactor.

The protein resides in the cytoplasm. The catalysed reaction is tRNA(Ala) + L-alanine + ATP = L-alanyl-tRNA(Ala) + AMP + diphosphate. In terms of biological role, catalyzes the attachment of alanine to tRNA(Ala) in a two-step reaction: alanine is first activated by ATP to form Ala-AMP and then transferred to the acceptor end of tRNA(Ala). Also edits incorrectly charged Ser-tRNA(Ala) and Gly-tRNA(Ala) via its editing domain. In Helicobacter pylori (strain J99 / ATCC 700824) (Campylobacter pylori J99), this protein is Alanine--tRNA ligase.